Reading from the N-terminus, the 309-residue chain is MKKKLFVSELIKHFDLEVLNHDFPEIEDREILTPSIKRLGLELSGHFIYDAISGVIVGWGTNESKFFEKIGSEKAKSSIEEIFSRKIPMLVLSKGFDKNYYSTIIEIANKHKTPVIFYKASLSEINTILGIYLLQYFAKKVQVHGTLVSVFGMGILIVGDSGLGKSEAALELVQKGHVLISDDAVLVSHYGNKYFGKAPYITKNLIEVRGLGLIDILSVHGLKSVLPECEINFVVELKDYEQNKSNFDRLGNKVLKYQIGEWKIPKIEIPIRQGRSVASLIEASANMFLSKLNGHDVLAMIQERSLNDE.

Residues His144 and Lys165 contribute to the active site. Gly159–Ser166 contacts ATP. Ser166 contributes to the Mg(2+) binding site. The Proton acceptor; for phosphorylation activity. Proton donor; for dephosphorylation activity role is filled by Asp183. The important for the catalytic mechanism of both phosphorylation and dephosphorylation stretch occupies residues Ile206–Asp215. Mg(2+) is bound at residue Glu207. Residue Arg249 is part of the active site. The important for the catalytic mechanism of dephosphorylation stretch occupies residues Pro270–Arg275.

The protein belongs to the HPrK/P family. In terms of assembly, homohexamer. Mg(2+) is required as a cofactor.

The enzyme catalyses [HPr protein]-L-serine + ATP = [HPr protein]-O-phospho-L-serine + ADP + H(+). It catalyses the reaction [HPr protein]-O-phospho-L-serine + phosphate + H(+) = [HPr protein]-L-serine + diphosphate. Its function is as follows. Catalyzes the ATP- as well as the pyrophosphate-dependent phosphorylation of a specific serine residue in HPr, a phosphocarrier protein of the phosphoenolpyruvate-dependent sugar phosphotransferase system (PTS). HprK/P also catalyzes the pyrophosphate-producing, inorganic phosphate-dependent dephosphorylation (phosphorolysis) of seryl-phosphorylated HPr (P-Ser-HPr). The polypeptide is HPr kinase/phosphorylase (hprK) (Mycoplasmopsis pulmonis (strain UAB CTIP) (Mycoplasma pulmonis)).